We begin with the raw amino-acid sequence, 103 residues long: Pyrimidine/purine nucleoside phosphorylase (103 aa).

This sequence belongs to the nucleoside phosphorylase PpnP family.

It carries out the reaction a purine D-ribonucleoside + phosphate = a purine nucleobase + alpha-D-ribose 1-phosphate. It catalyses the reaction adenosine + phosphate = alpha-D-ribose 1-phosphate + adenine. The enzyme catalyses cytidine + phosphate = cytosine + alpha-D-ribose 1-phosphate. The catalysed reaction is guanosine + phosphate = alpha-D-ribose 1-phosphate + guanine. It carries out the reaction inosine + phosphate = alpha-D-ribose 1-phosphate + hypoxanthine. It catalyses the reaction thymidine + phosphate = 2-deoxy-alpha-D-ribose 1-phosphate + thymine. The enzyme catalyses uridine + phosphate = alpha-D-ribose 1-phosphate + uracil. The catalysed reaction is xanthosine + phosphate = alpha-D-ribose 1-phosphate + xanthine. Catalyzes the phosphorolysis of diverse nucleosides, yielding D-ribose 1-phosphate and the respective free bases. Can use uridine, adenosine, guanosine, cytidine, thymidine, inosine and xanthosine as substrates. Also catalyzes the reverse reactions. The chain is Pyrimidine/purine nucleoside phosphorylase from Cupriavidus metallidurans (strain ATCC 43123 / DSM 2839 / NBRC 102507 / CH34) (Ralstonia metallidurans).